The following is a 518-amino-acid chain: Bifunctional purine biosynthesis protein PurH (518 aa).

Residues 1 to 144 (MSKRALISVS…KNHASVTVVC (144 aa)) form the MGS-like domain.

This sequence belongs to the PurH family.

It carries out the reaction (6R)-10-formyltetrahydrofolate + 5-amino-1-(5-phospho-beta-D-ribosyl)imidazole-4-carboxamide = 5-formamido-1-(5-phospho-D-ribosyl)imidazole-4-carboxamide + (6S)-5,6,7,8-tetrahydrofolate. It catalyses the reaction IMP + H2O = 5-formamido-1-(5-phospho-D-ribosyl)imidazole-4-carboxamide. It functions in the pathway purine metabolism; IMP biosynthesis via de novo pathway; 5-formamido-1-(5-phospho-D-ribosyl)imidazole-4-carboxamide from 5-amino-1-(5-phospho-D-ribosyl)imidazole-4-carboxamide (10-formyl THF route): step 1/1. It participates in purine metabolism; IMP biosynthesis via de novo pathway; IMP from 5-formamido-1-(5-phospho-D-ribosyl)imidazole-4-carboxamide: step 1/1. The protein is Bifunctional purine biosynthesis protein PurH of Lactococcus lactis subsp. lactis (strain IL1403) (Streptococcus lactis).